A 798-amino-acid polypeptide reads, in one-letter code: Penicillin-binding protein 1A (798 aa).

Residues 1-9 are Cytoplasmic-facing; the sequence is MIKKIITTC. A helical; Signal-anchor for type II membrane protein membrane pass occupies residues 10-30; that stretch reads MGLNNGLALFGVGLIAIAILV. Topologically, residues 31 to 798 are periplasmic; sequence TYPKLPSLDS…NNRQQLDSLF (768 aa). The segment at 50–218 is transglycosylase; that stretch reads LTIYSSDGQV…SAYNPIVNPE (169 aa). The active-site Proton donor; for transglycosylase activity is Glu-88. Residues 413–699 form a transpeptidase region; the sequence is TVVQEPLLQG…GTIAVPVWVE (287 aa). Residue Ser-460 is the Acyl-ester intermediate; for transpeptidase activity of the active site. The tract at residues 734–798 is disordered; it reads TSSDLALDNS…NNRQQLDSLF (65 aa). The segment covering 782–798 has biased composition (polar residues); sequence LPSNTGNNNRQQLDSLF.

The protein in the N-terminal section; belongs to the glycosyltransferase 51 family. This sequence in the C-terminal section; belongs to the transpeptidase family.

It localises to the cell inner membrane. It catalyses the reaction [GlcNAc-(1-&gt;4)-Mur2Ac(oyl-L-Ala-gamma-D-Glu-L-Lys-D-Ala-D-Ala)](n)-di-trans,octa-cis-undecaprenyl diphosphate + beta-D-GlcNAc-(1-&gt;4)-Mur2Ac(oyl-L-Ala-gamma-D-Glu-L-Lys-D-Ala-D-Ala)-di-trans,octa-cis-undecaprenyl diphosphate = [GlcNAc-(1-&gt;4)-Mur2Ac(oyl-L-Ala-gamma-D-Glu-L-Lys-D-Ala-D-Ala)](n+1)-di-trans,octa-cis-undecaprenyl diphosphate + di-trans,octa-cis-undecaprenyl diphosphate + H(+). It carries out the reaction Preferential cleavage: (Ac)2-L-Lys-D-Ala-|-D-Ala. Also transpeptidation of peptidyl-alanyl moieties that are N-acyl substituents of D-alanine.. It participates in cell wall biogenesis; peptidoglycan biosynthesis. Its function is as follows. Cell wall formation. Synthesis of cross-linked peptidoglycan from the lipid intermediates. The enzyme has a penicillin-insensitive transglycosylase N-terminal domain (formation of linear glycan strands) and a penicillin-sensitive transpeptidase C-terminal domain (cross-linking of the peptide subunits). In Neisseria flavescens, this protein is Penicillin-binding protein 1A (mrcA).